The sequence spans 311 residues: Putative S-adenosyl-L-methionine-dependent methyltransferase MUL_4761 (311 aa).

Residues Asp-132 and 161–162 (DL) each bind S-adenosyl-L-methionine.

Belongs to the UPF0677 family.

In terms of biological role, exhibits S-adenosyl-L-methionine-dependent methyltransferase activity. The chain is Putative S-adenosyl-L-methionine-dependent methyltransferase MUL_4761 from Mycobacterium ulcerans (strain Agy99).